The primary structure comprises 220 residues: MVKGMYHYIAQLWKRPYEGDMLTLMRQRLIKWRREPAIIRIEKPTRLDRARALGYKAKQGFIIVRVRVRKGGLRKQRPNKGRRPKRMGIYGFAPSKSLRLIAEERAARKYPNLEVLNSYYVGEDGNYKWYEVILVDPHHPAICNDPDIKWICEKQHRRRVFRGLTSAGKKMRGLRKSRGLKYTIKYKWKRKQKERLLKKRHEASRGAREPWQIVLKKAEE.

The protein belongs to the eukaryotic ribosomal protein eL15 family.

This is Large ribosomal subunit protein eL15 from Staphylothermus marinus (strain ATCC 43588 / DSM 3639 / JCM 9404 / F1).